The chain runs to 429 residues: Glutamate-1-semialdehyde 2,1-aminomutase (429 aa).

At Lys268 the chain carries N6-(pyridoxal phosphate)lysine.

Belongs to the class-III pyridoxal-phosphate-dependent aminotransferase family. HemL subfamily. In terms of assembly, homodimer. Pyridoxal 5'-phosphate is required as a cofactor.

It is found in the cytoplasm. The enzyme catalyses (S)-4-amino-5-oxopentanoate = 5-aminolevulinate. Its pathway is porphyrin-containing compound metabolism; protoporphyrin-IX biosynthesis; 5-aminolevulinate from L-glutamyl-tRNA(Glu): step 2/2. This Serratia proteamaculans (strain 568) protein is Glutamate-1-semialdehyde 2,1-aminomutase.